The sequence spans 593 residues: uncharacterized protein (593 aa).

12 consecutive transmembrane segments (helical) span residues Pro21–Tyr41, Val60–Ile80, Phe97–Phe117, Met148–Leu168, Val204–Ile224, Trp243–Val263, Met275–Leu295, Trp328–Ala348, Phe359–Gly379, Gly410–Val430, Val457–Gly477, and Ala485–Thr505.

Belongs to the BCCT transporter (TC 2.A.15) family.

It is found in the cell membrane. This is an uncharacterized protein from Mycobacterium tuberculosis (strain CDC 1551 / Oshkosh).